Consider the following 369-residue polypeptide: O-methyltransferase 12 (369 aa).

S-adenosyl-L-methionine-binding positions include Gly-181, Asp-204, 229–231 (GDF), Asp-230, Phe-231, and Lys-244. The active-site Proton acceptor is the His-248.

The protein belongs to the class I-like SAM-binding methyltransferase superfamily. Cation-independent O-methyltransferase family. COMT subfamily.

It catalyses the reaction resorcinol + S-adenosyl-L-methionine = 3-methoxyphenol + S-adenosyl-L-homocysteine + H(+). S-adenosyl-L-methionine dependent O-methyltransferase that may be involved in modifying resorcinol ring to synthesize a variant of 4-methyl-5-pentylbenzene-1,3-diol. This is O-methyltransferase 12 (omt12) from Dictyostelium discoideum (Social amoeba).